The primary structure comprises 1405 residues: Protein translocase subunit SecA (1405 aa).

Positions 1–1099 (MHMKIKKFKK…SDYKKLNEDE (1099 aa)) are protein translocase subunit SecA. Residues Gln-88, 106–110 (GEGKS), and Asp-494 contribute to the ATP site. The tract at residues 1100-1405 (SDDDIKAFYK…LDYLKENNKK (306 aa)) is unknown.

Belongs to the SecA family. Monomer and homodimer. Part of the essential Sec protein translocation apparatus which comprises SecA, SecYEG and auxiliary proteins SecDF. Other proteins may also be involved.

It is found in the cell membrane. The protein resides in the cytoplasm. The catalysed reaction is ATP + H2O + cellular proteinSide 1 = ADP + phosphate + cellular proteinSide 2.. Functionally, part of the Sec protein translocase complex. Interacts with the SecYEG preprotein conducting channel. Has a central role in coupling the hydrolysis of ATP to the transfer of proteins into and across the cell membrane, serving as an ATP-driven molecular motor driving the stepwise translocation of polypeptide chains across the membrane. The chain is Protein translocase subunit SecA from Malacoplasma penetrans (strain HF-2) (Mycoplasma penetrans).